The following is a 201-amino-acid chain: MESLHYAIALSGGIGTGKSTVASLLRLYGFEVIDADSIAHRLLKEKQKEVVDLFGEGILKEGEIDRKSLGARVFGDPKERARLEALLHPPIRQEILQKAQKLEAKAFPYFIDIPLFFEKRDDYPMVNQTLLIYAPRKLQVERIKKRDSLSMEEIEARLGAQMDIKEKVPMAHYILSNEGNLNDLTQEVERLIETIKKDFHV.

Positions 7 to 201 constitute a DPCK domain; it reads AIALSGGIGT…IETIKKDFHV (195 aa). 15 to 20 is an ATP binding site; sequence GTGKST.

This sequence belongs to the CoaE family.

It localises to the cytoplasm. The catalysed reaction is 3'-dephospho-CoA + ATP = ADP + CoA + H(+). It participates in cofactor biosynthesis; coenzyme A biosynthesis; CoA from (R)-pantothenate: step 5/5. Catalyzes the phosphorylation of the 3'-hydroxyl group of dephosphocoenzyme A to form coenzyme A. The protein is Dephospho-CoA kinase of Wolinella succinogenes (strain ATCC 29543 / DSM 1740 / CCUG 13145 / JCM 31913 / LMG 7466 / NCTC 11488 / FDC 602W) (Vibrio succinogenes).